We begin with the raw amino-acid sequence, 70 residues long: Small ribosomal subunit protein bS21 (70 aa).

This sequence belongs to the bacterial ribosomal protein bS21 family.

The polypeptide is Small ribosomal subunit protein bS21 (Campylobacter jejuni subsp. jejuni serotype O:23/36 (strain 81-176)).